The primary structure comprises 233 residues: Large ribosomal subunit protein uL1 (233 aa).

Belongs to the universal ribosomal protein uL1 family. In terms of assembly, part of the 50S ribosomal subunit.

Functionally, binds directly to 23S rRNA. The L1 stalk is quite mobile in the ribosome, and is involved in E site tRNA release. Protein L1 is also a translational repressor protein, it controls the translation of the L11 operon by binding to its mRNA. The chain is Large ribosomal subunit protein uL1 from Shewanella sediminis (strain HAW-EB3).